A 378-amino-acid chain; its full sequence is Uroporphyrinogen decarboxylase (378 aa).

Substrate contacts are provided by residues 40 to 44 (RQAGR), Asp90, Tyr167, Ser222, and His355.

The protein belongs to the uroporphyrinogen decarboxylase family. As to quaternary structure, homodimer.

The protein localises to the cytoplasm. It catalyses the reaction uroporphyrinogen III + 4 H(+) = coproporphyrinogen III + 4 CO2. The protein operates within porphyrin-containing compound metabolism; protoporphyrin-IX biosynthesis; coproporphyrinogen-III from 5-aminolevulinate: step 4/4. Functionally, catalyzes the decarboxylation of four acetate groups of uroporphyrinogen-III to yield coproporphyrinogen-III. The chain is Uroporphyrinogen decarboxylase from Psychrobacter cryohalolentis (strain ATCC BAA-1226 / DSM 17306 / VKM B-2378 / K5).